The primary structure comprises 477 residues: Dihydrolipoyl dehydrogenase 3 (477 aa).

FAD-binding positions include 39–47, K56, and A118; that span reads EKGEYGGAC. C47 and C52 are joined by a disulfide. Residues 186–190, E209, and 279–282 contribute to the NAD(+) site; these read GAGYI and AVGR. FAD contacts are provided by D322 and A330. H454 serves as the catalytic Proton acceptor.

It belongs to the class-I pyridine nucleotide-disulfide oxidoreductase family. As to quaternary structure, homodimer. FAD serves as cofactor.

The protein resides in the cytoplasm. The enzyme catalyses N(6)-[(R)-dihydrolipoyl]-L-lysyl-[protein] + NAD(+) = N(6)-[(R)-lipoyl]-L-lysyl-[protein] + NADH + H(+). The polypeptide is Dihydrolipoyl dehydrogenase 3 (lpdA3) (Haloarcula marismortui (strain ATCC 43049 / DSM 3752 / JCM 8966 / VKM B-1809) (Halobacterium marismortui)).